A 336-amino-acid polypeptide reads, in one-letter code: Biotin synthase (336 aa).

Residues N51–K270 enclose the Radical SAM core domain. [4Fe-4S] cluster is bound by residues C66, C70, and C73. 4 residues coordinate [2Fe-2S] cluster: C110, C141, C201, and R274.

It belongs to the radical SAM superfamily. Biotin synthase family. As to quaternary structure, homodimer. It depends on [4Fe-4S] cluster as a cofactor. [2Fe-2S] cluster is required as a cofactor.

The enzyme catalyses (4R,5S)-dethiobiotin + (sulfur carrier)-SH + 2 reduced [2Fe-2S]-[ferredoxin] + 2 S-adenosyl-L-methionine = (sulfur carrier)-H + biotin + 2 5'-deoxyadenosine + 2 L-methionine + 2 oxidized [2Fe-2S]-[ferredoxin]. Its pathway is cofactor biosynthesis; biotin biosynthesis; biotin from 7,8-diaminononanoate: step 2/2. In terms of biological role, catalyzes the conversion of dethiobiotin (DTB) to biotin by the insertion of a sulfur atom into dethiobiotin via a radical-based mechanism. The chain is Biotin synthase from Rhodopseudomonas palustris (strain ATCC BAA-98 / CGA009).